The chain runs to 242 residues: ATP synthase subunit a (242 aa).

6 consecutive transmembrane segments (helical) span residues 31 to 51 (IYML…FYNW), 84 to 104 (FIPL…LGMT), 114 to 134 (IIVT…VGFV), 140 to 160 (FLTL…MIVI), 189 to 209 (VIAS…IPLM), and 210 to 230 (VILI…FTIL).

The protein belongs to the ATPase A chain family. In terms of assembly, F-type ATPases have 2 components, CF(1) - the catalytic core - and CF(0) - the membrane proton channel. CF(1) has five subunits: alpha(3), beta(3), gamma(1), delta(1), epsilon(1). CF(0) has three main subunits: a(1), b(2) and c(9-12). The alpha and beta chains form an alternating ring which encloses part of the gamma chain. CF(1) is attached to CF(0) by a central stalk formed by the gamma and epsilon chains, while a peripheral stalk is formed by the delta and b chains.

It is found in the cell inner membrane. Functionally, key component of the proton channel; it plays a direct role in the translocation of protons across the membrane. The polypeptide is ATP synthase subunit a (Rickettsia canadensis (strain McKiel)).